A 122-amino-acid polypeptide reads, in one-letter code: NADH-quinone oxidoreductase subunit A (122 aa).

3 helical membrane-spanning segments follow: residues 10 to 30 (LIIF…LTAG), 67 to 87 (FALL…WAVV), and 91 to 111 (LGLF…IGLI).

This sequence belongs to the complex I subunit 3 family. NDH-1 is composed of 14 different subunits. Subunits NuoA, H, J, K, L, M, N constitute the membrane sector of the complex.

It localises to the cell membrane. The enzyme catalyses a quinone + NADH + 5 H(+)(in) = a quinol + NAD(+) + 4 H(+)(out). In terms of biological role, NDH-1 shuttles electrons from NADH, via FMN and iron-sulfur (Fe-S) centers, to quinones in the respiratory chain. The immediate electron acceptor for the enzyme in this species is believed to be a menaquinone. Couples the redox reaction to proton translocation (for every two electrons transferred, four hydrogen ions are translocated across the cytoplasmic membrane), and thus conserves the redox energy in a proton gradient. This Geobacillus kaustophilus (strain HTA426) protein is NADH-quinone oxidoreductase subunit A.